Here is a 484-residue protein sequence, read N- to C-terminus: 60S ribosome subunit biogenesis protein NOP8 (484 aa).

Residues 7–83 (KRIFVGNIFH…NILKVDEAKP (77 aa)) enclose the RRM domain. A phosphoserine mark is found at Ser-234, Ser-239, and Ser-268. The disordered stretch occupies residues 260–330 (DKPMTLNDSD…EGDGQEDNEF (71 aa)). The span at 320 to 329 (DEGDGQEDNE) shows a compositional bias: acidic residues. Residue Ser-370 is modified to Phosphoserine.

Interacts with NIP7 and RRP43. Together with DBP6, URB1, URB2 and RSA3, forms an RNA-independent complex, which is required during early maturation of nascent 60S ribosomal subunits.

The protein localises to the nucleus. It is found in the nucleolus. In terms of biological role, required for 60S ribosomal subunit synthesis. May be involved in assembly reactions occurring within late pre-ribosomal particles. This chain is 60S ribosome subunit biogenesis protein NOP8 (NOP8), found in Saccharomyces cerevisiae (strain ATCC 204508 / S288c) (Baker's yeast).